A 92-amino-acid chain; its full sequence is cAMP-dependent protein kinase inhibitor beta (92 aa).

The tract at residues 1–26 is disordered; that stretch reads MGGGTSPEAQQDSVMRTDSSEMTDVE. Residues 7–26 are compositionally biased toward polar residues; the sequence is PEAQQDSVMRTDSSEMTDVE. Serine 56 is modified (phosphoserine). Basic and acidic residues predominate over residues 70–82; sequence EDAKTKNEEKDQG. The disordered stretch occupies residues 70–92; that stretch reads EDAKTKNEEKDQGQPKTPLNEGK.

Belongs to the PKI family.

Functionally, extremely potent competitive inhibitor of cAMP-dependent protein kinase activity, this protein interacts with the catalytic subunit of the enzyme after the cAMP-induced dissociation of its regulatory chains. In Mus musculus (Mouse), this protein is cAMP-dependent protein kinase inhibitor beta (Pkib).